We begin with the raw amino-acid sequence, 32 residues long: Cytochrome b6-f complex subunit 8 (32 aa).

Residues 6–26 form a helical membrane-spanning segment; the sequence is IVGITWAALMVVFTFSLSLVV.

Belongs to the PetN family. The 4 large subunits of the cytochrome b6-f complex are cytochrome b6, subunit IV (17 kDa polypeptide, PetD), cytochrome f and the Rieske protein, while the 4 small subunits are PetG, PetL, PetM and PetN. The complex functions as a dimer.

The protein resides in the plastid. It is found in the chloroplast thylakoid membrane. Component of the cytochrome b6-f complex, which mediates electron transfer between photosystem II (PSII) and photosystem I (PSI), cyclic electron flow around PSI, and state transitions. The polypeptide is Cytochrome b6-f complex subunit 8 (Pinus koraiensis (Korean pine)).